A 364-amino-acid polypeptide reads, in one-letter code: Aminomethyltransferase (364 aa).

Belongs to the GcvT family. The glycine cleavage system is composed of four proteins: P, T, L and H.

It catalyses the reaction N(6)-[(R)-S(8)-aminomethyldihydrolipoyl]-L-lysyl-[protein] + (6S)-5,6,7,8-tetrahydrofolate = N(6)-[(R)-dihydrolipoyl]-L-lysyl-[protein] + (6R)-5,10-methylene-5,6,7,8-tetrahydrofolate + NH4(+). Functionally, the glycine cleavage system catalyzes the degradation of glycine. The sequence is that of Aminomethyltransferase from Shigella dysenteriae serotype 1 (strain Sd197).